The sequence spans 150 residues: PTS system galactitol-specific EIIA component (150 aa).

Positions 1–144 (MTNLFVRSGI…TQLKEYFTKY (144 aa)) constitute a PTS EIIA type-2 domain. The active-site Tele-phosphohistidine intermediate is the histidine 62. The residue at position 62 (histidine 62) is a Phosphohistidine; by HPr.

In terms of assembly, forms a complex with one each of subunit of GatA, GatB and 2 subunits of GatC.

It localises to the cytoplasm. The phosphoenolpyruvate-dependent sugar phosphotransferase system (sugar PTS), a major carbohydrate active transport system, catalyzes the phosphorylation of incoming sugar substrates concomitantly with their translocation across the cell membrane. The enzyme II complex composed of GatA, GatB and GatC is involved in galactitol transport. This Escherichia coli O157:H7 protein is PTS system galactitol-specific EIIA component (gatA).